A 424-amino-acid polypeptide reads, in one-letter code: Hemagglutinin-esterase (424 aa).

A signal peptide spans 1–16 (MFLLPRFVLVSCIIGS). Residues 7–127 (FVLVSCIIGS…SNDIWMQNKG (121 aa)) are esterase domain 1. Residues 17–392 (LGFDNPPTNV…PICVYDPLPI (376 aa)) lie on the Virion surface side of the membrane. Serine 40 acts as the Nucleophile in catalysis. A disulfide bridge connects residues cysteine 44 and cysteine 65. N-linked (GlcNAc...) asparagine; by host glycans are attached at residues asparagine 54, asparagine 89, asparagine 153, asparagine 236, and asparagine 301. Cystine bridges form between cysteine 113/cysteine 162, cysteine 197/cysteine 276, and cysteine 205/cysteine 249. The receptor binding stretch occupies residues 128 to 266 (LFYTQLYKNM…GNYLAISNEL (139 aa)). Positions 267-379 (LLTVPTKAIC…RCPTAADINT (113 aa)) are esterase domain 2. Cysteine 307 and cysteine 312 are disulfide-bonded. An N-linked (GlcNAc...) asparagine; by host glycan is attached at asparagine 316. Residues aspartate 326 and histidine 329 each act as charge relay system in the active site. Cysteine 347 and cysteine 371 form a disulfide bridge. Residue asparagine 358 is glycosylated (N-linked (GlcNAc...) asparagine; by host). Residues 393-413 (ILLGILLGVAVIIIVVLLLYF) form a helical membrane-spanning segment. At 414–424 (MVDNGTRLHDA) the chain is on the intravirion side. A glycan (N-linked (GlcNAc...) asparagine; by host) is linked at asparagine 417.

It belongs to the influenza type C/coronaviruses hemagglutinin-esterase family. In terms of assembly, homodimer; disulfide-linked. Forms a complex with the M protein in the pre-Golgi. Associates then with S-M complex to form a ternary complex S-M-HE. In terms of processing, N-glycosylated in the host RER.

Its subcellular location is the virion membrane. It is found in the host cell membrane. The catalysed reaction is N-acetyl-9-O-acetylneuraminate + H2O = N-acetylneuraminate + acetate + H(+). The enzyme catalyses N-acetyl-4-O-acetylneuraminate + H2O = N-acetylneuraminate + acetate + H(+). Functionally, structural protein that makes short spikes at the surface of the virus. Contains receptor binding and receptor-destroying activities. Mediates de-O-acetylation of N-acetyl-4-O-acetylneuraminic acid, which is probably the receptor determinant recognized by the virus on the surface of erythrocytes and susceptible cells. This receptor-destroying activity is important for virus release as it probably helps preventing self-aggregation and ensures the efficient spread of the progeny virus from cell to cell. May serve as a secondary viral attachment protein for initiating infection, the spike protein being the major one. May become a target for both the humoral and the cellular branches of the immune system. The protein is Hemagglutinin-esterase of Bovine coronavirus (strain LSU-94LSS-051) (BCoV-LSU).